We begin with the raw amino-acid sequence, 218 residues long: Carnitine transport permease protein OpuCB (218 aa).

In terms of domain architecture, ABC transmembrane type-1 spans 19–198; it reads TWQHLFISLS…ILALVVEFAL (180 aa). A run of 5 helical transmembrane segments spans residues 23–43, 48–68, 79–101, 149–169, and 179–199; these read LFISLSAVILGIAVAVPTGIL, PKVANFVIGVVSVLQTVPSLA, VGTLPAIIALFIYALLPILRNTF, VIAWATLASYIGAGGLGDFIF, and LILGGAIPVTILALVVEFALG.

The protein belongs to the binding-protein-dependent transport system permease family. As to quaternary structure, the complex is composed of two ATP-binding proteins (OpuCA), two transmembrane proteins (OpuCB and OpuCD) and a solute-binding protein (OpuCC).

It is found in the cell membrane. Functionally, part of the ABC transporter complex OpuCABCD involved in carnitine uptake. Probably responsible for the translocation of the substrate across the membrane. Involved, with BetL and GbuABC, in osmoprotection and cryoprotection of Listeria. The polypeptide is Carnitine transport permease protein OpuCB (opuCB) (Listeria monocytogenes).